The primary structure comprises 646 residues: Tyrosine-protein kinase MasK (646 aa).

Over 1–415 (MSPPQTTLPV…PTAGGRRWRT (415 aa)) the chain is Periplasmic. The 276-residue stretch at 25 to 300 (YVLVRKLAEG…AFADALETFL (276 aa)) folds into the Protein kinase domain. ATP contacts are provided by residues 31–39 (LAEGGMAEI) and lysine 57. The active-site Proton acceptor is aspartate 163. A disordered region spans residues 373–410 (TSAQRPGMSMRPSSPGVPAHGAASRGSTSPESAPTAGG). The helical transmembrane segment at 416-433 (LAVGLAGGLMLAAAGIVG) threads the bilayer. At 434–646 (YRQWMTTPAS…VMPFSWRVTQ (213 aa)) the chain is on the cytoplasmic side. Residues 521-547 (AGAASDVEAEADEEGADAAPVRSKKAS) form a disordered region. Residues 527–536 (VEAEADEEGA) show a composition bias toward acidic residues.

It belongs to the protein kinase superfamily. Tyr protein kinase family. As to quaternary structure, interacts with MglA. Autophosphorylated.

It localises to the cell inner membrane. The catalysed reaction is L-tyrosyl-[protein] + ATP = O-phospho-L-tyrosyl-[protein] + ADP + H(+). Its function is as follows. Essential for growth. Interacts with MglA to control social gliding motility. The sequence is that of Tyrosine-protein kinase MasK (masK) from Myxococcus xanthus (strain DK1622).